The chain runs to 458 residues: Protein RICE SALT SENSITIVE 3 (458 aa).

Residues 1 to 17 (MVGSGAAGGGGGGGGGG) are compositionally biased toward gly residues. Disordered stretches follow at residues 1–21 (MVGSGAAGGGGGGGGGGDHAR), 220–325 (TSPS…PEGD), 354–374 (GGGADDGSKTAAAAQDAGHGG), and 386–458 (SHSN…TFLE). The span at 220–232 (TSPSPSSFPLKQQ) shows a compositional bias: low complexity. A compositionally biased stretch (pro residues) spans 245 to 262 (HAPPQLPPGASPLFPPGP). The span at 308–317 (QQPMAAPQQH) shows a compositional bias: low complexity. A compositionally biased stretch (low complexity) spans 413–436 (SSSTTSTSPSVSASTAPAPPQQQQ).

As to quaternary structure, interacts with BHLH094, BHLH089, TIFY11A/JAZ9 and TIFY11C/JAZ11. Forms a ternary complex with TIFY11A/JAZ9 and BHLH094 in the nucleus. As to expression, expressed in root tips. Expressed at high levels in the meristematic zone and at low levels in the elongation zone of the root tip.

It is found in the nucleus. It localises to the cytoplasm. Its function is as follows. Involved in the repression of jasmonate (JA)-induced genes. Forms a ternary complex with TIFY11A/JAZ9 and BHLH094 to negatively regulate JA-responsive genes. Involved in transcriptional regulation in the root tip. Plays a regulatory role in root cell elongation. Regulates root cell elongation during salt stress. This chain is Protein RICE SALT SENSITIVE 3, found in Oryza sativa subsp. japonica (Rice).